The following is a 693-amino-acid chain: Alpha-glucosidase (693 aa).

Residues Asp320 and Glu323 contribute to the active site. The Proton donor role is filled by Asp416.

This sequence belongs to the glycosyl hydrolase 31 family.

The protein resides in the cytoplasm. The enzyme catalyses Hydrolysis of terminal, non-reducing (1-&gt;4)-linked alpha-D-glucose residues with release of alpha-D-glucose.. Its function is as follows. Major soluble alpha-glucosidase. The sequence is that of Alpha-glucosidase (malA) from Saccharolobus solfataricus (strain ATCC 35092 / DSM 1617 / JCM 11322 / P2) (Sulfolobus solfataricus).